Here is a 309-residue protein sequence, read N- to C-terminus: Calcium homeostasis modulator protein 5 (309 aa).

The Cytoplasmic portion of the chain corresponds to 1–15 (MDAFQSILKFFLNQK). The helical transmembrane segment at 16 to 37 (TAIGYSFMALLTVGSERLFSLV) threads the bilayer. Residues R32 and V37 each contribute to the a 1,2-diacyl-sn-glycero-3-phosphate site. The Extracellular portion of the chain corresponds to 38–45 (AFKCPCSI). Cystine bridges form between C41–C127, C43–C158, and C142–C149. A helical membrane pass occupies residues 46–70 (ENTAYGLVFLFAPAWVLLILGFFLN). Residues 71–99 (NKAWRLFTGCCMNPQKIFPRRRCCRFFYV) are Cytoplasmic-facing. A helical membrane pass occupies residues 100–129 (LGHITLSSLVAPVMWLSVALLNGTFYECAM). N121 is an a 1,2-diacyl-sn-glycero-3-phosphate binding site. Residues 130–174 (SGTRSTRLLEMICKGKPKECWEELHKVSCGKSSMAAMDSEEVRLS) are Extracellular-facing. A helical membrane pass occupies residues 175–200 (LQAQSQILGWCLICSASFFSLLTTCY). Residues 201–309 (ARCRSKVSYL…MILVGTAQSL (109 aa)) lie on the Cytoplasmic side of the membrane. An a 1,2-diacyl-sn-glycero-3-phosphate-binding site is contributed by R202.

This sequence belongs to the CALHM family. As to quaternary structure, oligomerizes to form undecameric cone-shaped channels.

It is found in the membrane. Its function is as follows. May assemble to form large pore channels with gating and ion conductance likely regulated by membrane lipids. The polypeptide is Calcium homeostasis modulator protein 5 (Rattus norvegicus (Rat)).